The sequence spans 519 residues: Cilia- and flagella-associated protein 157 (519 aa).

The segment covering 1 to 11 (MPPKKKGKRGP) has biased composition (basic residues). The disordered stretch occupies residues 1–25 (MPPKKKGKRGPSAKTKEKETVRVAS). Coiled coils occupy residues 28-185 (VTEQ…EKKV) and 241-356 (IELI…QRTL).

The protein belongs to the CFAP157 family.

The protein localises to the cytoplasm. It is found in the cytoskeleton. The protein resides in the cilium basal body. In terms of biological role, specifically required during spermatogenesis for flagellum morphogenesis and sperm motility. The chain is Cilia- and flagella-associated protein 157 from Xenopus tropicalis (Western clawed frog).